The following is a 289-amino-acid chain: MEEGGRSPREEAAEPQESGGDAEPGGGRRALLLPPGDPPHPHPHPHRITNFFIDNILRPEFGRRKEAGGTAGEPRRPGAESRRSPAAAAPAPGAPVPGGGGGGGGGSPGRGEGGPAALALHGAAKKGGDPAALEAALKARGLSGAELSVSSDSDSSQAGSNAGNQPMLWPAWVYCTRYSDRPSSGPRSRKPKKKNPNKEDKRPRTAFTAEQLQRLKAEFQTNRYLTEQRRQSLAQELGLNESQIKIWFQNKRAKIKKATGSKNSLAVHLMAQGLYNHSTTAKDGKSDSE.

2 stretches are compositionally biased toward basic and acidic residues: residues 1-12 (MEEGGRSPREEA) and 60-83 (EFGR…ESRR). Disordered stretches follow at residues 1-166 (MEEG…GNQP) and 179-206 (SDRP…PRTA). Over residues 96 to 114 (VPGGGGGGGGGSPGRGEGG) the composition is skewed to gly residues. The segment covering 142–160 (LSGAELSVSSDSDSSQAGS) has biased composition (low complexity). A DNA-binding region (homeobox) is located at residues 200–259 (DKRPRTAFTAEQLQRLKAEFQTNRYLTEQRRQSLAQELGLNESQIKIWFQNKRAKIKKAT).

The protein belongs to the engrailed homeobox family.

Its subcellular location is the nucleus. This is Homeobox protein engrailed-2 (EN2) from Gallus gallus (Chicken).